The following is a 1215-amino-acid chain: Chromosome segregation protein sudA (1215 aa).

32 to 39 is an ATP binding site; sequence GRNGSGKS. The stretch at 177–522 forms a coiled coil; the sequence is KIMHETNSKR…LSQMMDHNTS (346 aa). The segment at 313-332 is disordered; the sequence is SDNQAAAQESKARHDESLKA. The SMC hinge domain occupies 538-650; sequence EGVYGTLAEL…PNLQVASQYA (113 aa). The disordered stretch occupies residues 654-676; the sequence is GVNATTPEGDRSDKRGALTGGFH. Positions 684 to 1091 form a coiled coil; the sequence is DAVKNLAKWR…EEAKHSVENY (408 aa).

It belongs to the SMC family. SMC3 subfamily.

The protein resides in the nucleus. Its function is as follows. Involved in chromosome segregation in mitosis. This chain is Chromosome segregation protein sudA (sudA), found in Emericella nidulans (strain FGSC A4 / ATCC 38163 / CBS 112.46 / NRRL 194 / M139) (Aspergillus nidulans).